A 228-amino-acid polypeptide reads, in one-letter code: Ribosomal RNA small subunit methyltransferase G (228 aa).

S-adenosyl-L-methionine contacts are provided by residues glycine 89, leucine 94, 140-141, and arginine 159; that span reads VE.

It belongs to the methyltransferase superfamily. RNA methyltransferase RsmG family.

The protein resides in the cytoplasm. The enzyme catalyses guanosine(527) in 16S rRNA + S-adenosyl-L-methionine = N(7)-methylguanosine(527) in 16S rRNA + S-adenosyl-L-homocysteine. Its function is as follows. Specifically methylates the N7 position of guanine in position 527 of 16S rRNA. The polypeptide is Ribosomal RNA small subunit methyltransferase G (Burkholderia ambifaria (strain MC40-6)).